A 76-amino-acid polypeptide reads, in one-letter code: Paralithocin 3 (76 aa).

Residues 1–23 (MGPMKVLLVMLVVMVAAPHIADA) form the signal peptide. 4 cysteine pairs are disulfide-bonded: Cys31–Cys62, Cys40–Cys58, Cys44–Cys56, and Cys49–Cys59. Pro74 carries the proline amide; partial modification.

The protein belongs to the paralithocin family. In terms of processing, the amidated form is probably the active form.

Functionally, has antibacterial activity, mainly against marine Gram-positive bacteria like C.maltaromaticum (MIC=25 uM), C.mobile (MIC=12.5 uM), C.divergens (MIC=25 uM) and C.funditum (MIC=12.5 uM) but also against C.glutamicum (MIC=12.5 uM). Has very little or no activity against Gram-negative bacteria. The polypeptide is Paralithocin 3 (Paralithodes camtschaticus (Red king crab)).